The chain runs to 406 residues: Protease ElaD (406 aa).

The active site involves His-234. Catalysis depends on Cys-316, which acts as the Nucleophile.

It belongs to the peptidase C79 family.

Its function is as follows. Protease that can act as an efficient and specific deubiquitinating enzyme in vitro. Does not possess desumoylating and deneddylating activities. The physiological substrate is unknown. In Escherichia coli O139:H28 (strain E24377A / ETEC), this protein is Protease ElaD (elaD).